Consider the following 542-residue polypeptide: Chaperonin GroEL (542 aa).

Residues 29–32 (TLGP), 86–90 (DGTTT), glycine 413, 476–478 (NAA), and aspartate 492 each bind ATP. The disordered stretch occupies residues 521–542 (QPDENGPAAGPDMGMGGMGGMM). The segment covering 533–542 (MGMGGMGGMM) has biased composition (gly residues).

Belongs to the chaperonin (HSP60) family. As to quaternary structure, forms a cylinder of 14 subunits composed of two heptameric rings stacked back-to-back. Interacts with the co-chaperonin GroES.

Its subcellular location is the cytoplasm. The enzyme catalyses ATP + H2O + a folded polypeptide = ADP + phosphate + an unfolded polypeptide.. Together with its co-chaperonin GroES, plays an essential role in assisting protein folding. The GroEL-GroES system forms a nano-cage that allows encapsulation of the non-native substrate proteins and provides a physical environment optimized to promote and accelerate protein folding. The protein is Chaperonin GroEL of Listeria innocua serovar 6a (strain ATCC BAA-680 / CLIP 11262).